Reading from the N-terminus, the 343-residue chain is Heat-inducible transcription repressor HrcA (343 aa).

Belongs to the HrcA family.

In terms of biological role, negative regulator of class I heat shock genes (grpE-dnaK-dnaJ and groELS operons). Prevents heat-shock induction of these operons. The polypeptide is Heat-inducible transcription repressor HrcA (Bacillus subtilis (strain 168)).